A 191-amino-acid chain; its full sequence is uncharacterized protein (191 aa).

Transmembrane regions (helical) follow at residues 4-24 (IYRQ…VLIF), 26-46 (KQLI…YFLC), 68-88 (GKGA…IDDI), 90-110 (AVFF…IIGI), 135-155 (LILY…SAFI), and 168-188 (LYLP…CSLM).

The protein localises to the cell membrane. This is an uncharacterized protein from Methanocaldococcus jannaschii (strain ATCC 43067 / DSM 2661 / JAL-1 / JCM 10045 / NBRC 100440) (Methanococcus jannaschii).